Here is a 190-residue protein sequence, read N- to C-terminus: Ribosome maturation factor RimM (190 aa).

One can recognise a PRC barrel domain in the interval 95-171; it reads DPDEFYDHEL…VVMIEPPEGL (77 aa). The tract at residues 169–190 is disordered; it reads EGLLDPDFGDKSNSDNSNSDND.

The protein belongs to the RimM family. Binds ribosomal protein uS19.

The protein localises to the cytoplasm. Functionally, an accessory protein needed during the final step in the assembly of 30S ribosomal subunit, possibly for assembly of the head region. Essential for efficient processing of 16S rRNA. May be needed both before and after RbfA during the maturation of 16S rRNA. It has affinity for free ribosomal 30S subunits but not for 70S ribosomes. The polypeptide is Ribosome maturation factor RimM (Rhodococcus erythropolis (strain PR4 / NBRC 100887)).